The sequence spans 612 residues: Phosphoenolpyruvate carboxykinase [GTP] (612 aa).

Substrate is bound by residues arginine 82 and 221 to 223 (YGG). 2 residues coordinate Mn(2+): lysine 230 and histidine 250. Serine 272 contributes to the substrate binding site. 273–278 (ACGKTN) provides a ligand contact to GTP. Cysteine 274 is an active-site residue. Aspartate 297 contributes to the Mn(2+) binding site. Position 388-390 (388-390 (NSR)) interacts with substrate. Residues arginine 390, arginine 421, and 516-519 (FGEN) contribute to the GTP site.

This sequence belongs to the phosphoenolpyruvate carboxykinase [GTP] family. As to quaternary structure, monomer. Mn(2+) is required as a cofactor.

Its subcellular location is the cytoplasm. The catalysed reaction is oxaloacetate + GTP = phosphoenolpyruvate + GDP + CO2. The protein operates within carbohydrate biosynthesis; gluconeogenesis. In terms of biological role, catalyzes the conversion of oxaloacetate (OAA) to phosphoenolpyruvate (PEP), the rate-limiting step in the metabolic pathway that produces glucose from lactate and other precursors derived from the citric acid cycle. The protein is Phosphoenolpyruvate carboxykinase [GTP] of Corynebacterium efficiens (strain DSM 44549 / YS-314 / AJ 12310 / JCM 11189 / NBRC 100395).